The following is a 272-amino-acid chain: UPF0759 protein YecE (272 aa).

It belongs to the UPF0759 family.

The protein is UPF0759 protein YecE (yecE) of Escherichia coli (strain K12).